The sequence spans 156 residues: MAATLTPEQITEYKGIFEMFDEEGNGLVKTDDLESLMSLVGINPTKRDLANMAKDVDKDKKGTFNCDGFLALMGIYHEKSKNQDEELRAAFKVFDKEHKGYIEWDTLKYVLMNAGEPLNEQEAELMMKEADKDGDGTIDYEEFVAMMTGESFKLTQ.

4 consecutive EF-hand domains span residues glutamate 8–asparagine 43, proline 44–lysine 79, asparagine 82–proline 117, and leucine 118–lysine 153. Ca(2+) contacts are provided by aspartate 131, aspartate 133, aspartate 135, threonine 137, and glutamate 142.

Belongs to the calmodulin family. Calglandulin subfamily. As to expression, expressed by the venom gland.

The protein localises to the cytoplasm. In terms of biological role, may be involved in the cellular control mechanism of the secretion of toxins from the gland into the venom. The polypeptide is Calglandulin (Bothrops insularis (Golden lancehead)).